The chain runs to 545 residues: Chaperonin GroEL 1 (545 aa).

ATP contacts are provided by residues 29 to 32 (TLGP), 86 to 90 (DGTTT), Gly413, 477 to 479 (NAA), and Asp493.

This sequence belongs to the chaperonin (HSP60) family. Forms a cylinder of 14 subunits composed of two heptameric rings stacked back-to-back. Interacts with the co-chaperonin GroES.

Its subcellular location is the cytoplasm. It catalyses the reaction ATP + H2O + a folded polypeptide = ADP + phosphate + an unfolded polypeptide.. Its function is as follows. Together with its co-chaperonin GroES, plays an essential role in assisting protein folding. The GroEL-GroES system forms a nano-cage that allows encapsulation of the non-native substrate proteins and provides a physical environment optimized to promote and accelerate protein folding. The chain is Chaperonin GroEL 1 from Arthrobacter sp. (strain FB24).